We begin with the raw amino-acid sequence, 428 residues long: Tyrosine--tRNA ligase (428 aa).

Position 36 (Y36) interacts with L-tyrosine. The 'HIGH' region motif lies at 41–50 (PTARSLHIGS). Residues Y169 and Q173 each coordinate L-tyrosine. The short motif at 229-233 (KMGKT) is the 'KMSKS' region element. An ATP-binding site is contributed by K232. Residues 361–427 (IPAYEIMHEC…GKKKYMIIKV (67 aa)) enclose the S4 RNA-binding domain.

Belongs to the class-I aminoacyl-tRNA synthetase family. TyrS type 1 subfamily. As to quaternary structure, homodimer.

It is found in the cytoplasm. It carries out the reaction tRNA(Tyr) + L-tyrosine + ATP = L-tyrosyl-tRNA(Tyr) + AMP + diphosphate + H(+). Functionally, catalyzes the attachment of tyrosine to tRNA(Tyr) in a two-step reaction: tyrosine is first activated by ATP to form Tyr-AMP and then transferred to the acceptor end of tRNA(Tyr). The chain is Tyrosine--tRNA ligase from Syntrophus aciditrophicus (strain SB).